The chain runs to 598 residues: MDDHNLEEFRRHWQEELAQSQALRRRRRLEAGERRSPRRPEAGARGEPASGYLGLAQGLLEGAGRPPAPRPGRGGDRKDTSSRSRSPPDRDATEPEPLVDQLIRDLNELDDVPFFDVRLPYELAINIFQYLNRRELGLCAQVSKTWKVIAEDEVLWYRLCRQEGHLPHSRFSDYTCWKLILQECLAKEHTLRANWKNRKGAVSELEHVPDAVLCDVRSHDGVVIAGYTSGDVRVWDTRTWDYVAPFLESESEEEDPGMQPYVSFVRINSSLAVAAYEDGILNIWDLRTGRFPIFRFEHDARIQALALSQEKPIVATASAFDVVMLYPNEEGHWHVASEFEVQKLVDYLEIVPNTGRYPVAIATAGDLVYLLKADDSARTLHYVYGQPATCLDVSASQVAFGVKSLGWVYEGNKILVYSLEAERCLSKLGNALGDFTCVNIRDSPPNLMVSGNMDRRVRIHDLRSDKIALSLSAHQLGVSAVQMDDWKVVSGGEEGLVSVWDYRMNQKLWEVHSRHPVRYLSFNSHSLITANVPYEKVLRNSDLDNFACHRRHRGLIHAYEFAVDQLAFQSPLPVCRLPRDIMAGYSYDLALSFPHDSI.

Met-1 bears the N-acetylmethionine mark. A disordered region spans residues 20 to 97 (SQALRRRRRL…PDRDATEPEP (78 aa)). Over residues 29 to 44 (LEAGERRSPRRPEAGA) the composition is skewed to basic and acidic residues. Low complexity predominate over residues 51–65 (GYLGLAQGLLEGAGR). Basic and acidic residues predominate over residues 73 to 93 (RGGDRKDTSSRSRSPPDRDAT). Ser-84 is modified (phosphoserine). The residue at position 86 (Ser-86) is a Phosphoserine; by MTOR. Positions 113–159 (PFFDVRLPYELAINIFQYLNRRELGLCAQVSKTWKVIAEDEVLWYRL) constitute an F-box domain. WD repeat units follow at residues 201-250 (AVSE…LESE), 259-299 (QPYV…FEHD), 300-340 (ARIQ…SEFE), 341-383 (VQKL…LHYV), 384-429 (YGQP…SKLG), 430-475 (NALG…SAHQ), 476-513 (LGVSAVQMDDWKVVSGGEEGLVSVWDYRMNQKLWEVHS), and 514-561 (RHPV…AYEF).

As to quaternary structure, component of the Cul7-RING(FBXW8) complex consisting of CUL7, RBX1, SKP1 and FBXW8; within the complex interacts with CUL7 and SKP1. Interacts with GLMN isoform 1. Interacts with OBSL1, CUL1, CUL2, CCT6B, PFDN5, CCT2, CCT3, CCT6A, CCT7, VBP1, CCDC8, ARF1, TRIP13, PDCD5 and GORASP1. Interacts with MAP4K1/HPK1 (when autophosphorylated). Associated component of the 3M complex. Interacts with POUF51 (when phosphorylated on 'Ser-347'). In terms of processing, phosphorylation at Ser-86 by mTORC2 promotes FBXW8 stabilization, allowing its translocation to the cytosol in response to insulin. In terms of tissue distribution, widely expressed. Expressed at higher level in skeletal muscle, cartilage and lung.

Its subcellular location is the cytoplasm. The protein localises to the perinuclear region. It is found in the golgi apparatus. The protein resides in the cytosol. The protein operates within protein modification; protein ubiquitination. Functionally, substrate-recognition component of the Cul7-RING(FBXW8) ubiquitin ligase complex, which mediates the ubiquitination and subsequent proteasomal degradation of target proteins. The Cul7-RING(FBXW8) complex mediates ubiquitination and consequent degradation of GORASP1, acting as a component of the ubiquitin ligase pathway that regulates Golgi morphogenesis and dendrite patterning in brain. Mediates ubiquitination and degradation of IRS1 in a mTOR-dependent manner: the Cul7-RING(FBXW8) complex recognizes and binds IRS1 previously phosphorylated by S6 kinase (RPS6KB1 or RPS6KB2). The Cul7-RING(FBXW8) complex also mediates ubiquitination of MAP4K1/HPK1: recognizes and binds autophosphorylated MAP4K1/HPK1, leading to its degradation, thereby affecting cell proliferation and differentiation. The Cul7-RING(FBXW8) complex also mediates ubiquitination of phosphorylated cyclin-D1 (CCND1). The Cul7-RING(FBXW8) complex is however not a major regulator of CCND1 stability during the G1/S transition. Associated component of the 3M complex, suggesting that it mediates some of 3M complex functions. The chain is F-box/WD repeat-containing protein 8 (Fbxw8) from Mus musculus (Mouse).